Reading from the N-terminus, the 811-residue chain is RFX-like DNA-binding protein RFX1 (811 aa).

Disordered regions lie at residues 48-92 (EPTS…TYLP) and 111-156 (LLHQ…QRQP). Over residues 51-70 (SRGSNDNSNGPSNGSSVNSN) the composition is skewed to low complexity. Residues 140–149 (SPTPTQPPAQ) are compositionally biased toward pro residues. Position 173 is a phosphoserine (serine 173). The segment at 181-222 (KSEETLNNNPPTAAKRTNTFPSIPSSTKKQKTSQEKRISSIS) is disordered. Residues 185-204 (TLNNNPPTAAKRTNTFPSIP) are compositionally biased toward polar residues. A DNA-binding region (RFX-type winged-helix) is located at residues 285 to 360 (ALLWLMKNCK…YHYCGLKLTV (76 aa)). The segment covering 377-391 (LVHNNDPISPLSSPS) has biased composition (low complexity). The segment at 377-461 (LVHNNDPISP…AANNPTGTLS (85 aa)) is disordered. Polar residues predominate over residues 409-428 (NRKSLSRTGSPVKQSSNDNP). Residues 434–445 (ESQHPNETEANK) are compositionally biased toward basic and acidic residues.

It belongs to the RFX family.

This chain is RFX-like DNA-binding protein RFX1 (RFX1), found in Saccharomyces cerevisiae (strain ATCC 204508 / S288c) (Baker's yeast).